Consider the following 650-residue polypeptide: PTS system mannose-specific EIIBCA component (650 aa).

The 98-residue stretch at 1 to 98 (MKLLAITSCP…PEELIQKALN (98 aa)) folds into the PTS EIIB type-2 domain. The active-site Phosphocysteine intermediate; for EIIB activity is Cys-9. Residues 123–456 (IYRHLMNGVS…SLVTALFVNV (334 aa)) enclose the PTS EIIC type-2 domain. The next 7 helical transmembrane spans lie at 133–153 (FMVPFIVVGGLLIAVALTLGG), 174–194 (IGSASFSFMIPILAGYIAYSI), 199–219 (GLVPGMIGGYIAATGSFYDSA), 221–241 (GAGFLGGIIAGFLAGYAALWI), 256–276 (IIIIPVFASLIVGLAFVFLIG), 297–317 (SSILLALILGAMISFDMGGPV), and 336–356 (IMGPIAVAICIPPIGLGIATF). Position 365 is a phosphoserine (Ser-365). 3 helical membrane passes run 369 to 389 (MGKAAFTMGLFGITEGAIPFA), 396 to 416 (VIPSIMAGSMTGSVIAMIGNV), and 436 to 456 (VLMFFIAVIAGSLVTALFVNV). One can recognise a PTS EIIA type-2 domain in the interval 504 to 649 (DIISPELIEP…EEAYKLLEEI (146 aa)). His-566 serves as the catalytic Tele-phosphohistidine intermediate; for EIIA activity.

It is found in the cell membrane. The enzyme catalyses D-mannose(out) + N(pros)-phospho-L-histidyl-[protein] = D-mannose 6-phosphate(in) + L-histidyl-[protein]. In terms of biological role, the phosphoenolpyruvate-dependent sugar phosphotransferase system (sugar PTS), a major carbohydrate active -transport system, catalyzes the phosphorylation of incoming sugar substrates concomitantly with their translocation across the cell membrane. This system is involved in mannose transport. The chain is PTS system mannose-specific EIIBCA component (manP) from Bacillus subtilis (strain 168).